We begin with the raw amino-acid sequence, 159 residues long: Ribosomal RNA large subunit methyltransferase H (159 aa).

S-adenosyl-L-methionine contacts are provided by residues L76, G108, and 127–132 (FSKMTF).

This sequence belongs to the RNA methyltransferase RlmH family. In terms of assembly, homodimer.

It is found in the cytoplasm. The enzyme catalyses pseudouridine(1915) in 23S rRNA + S-adenosyl-L-methionine = N(3)-methylpseudouridine(1915) in 23S rRNA + S-adenosyl-L-homocysteine + H(+). In terms of biological role, specifically methylates the pseudouridine at position 1915 (m3Psi1915) in 23S rRNA. The protein is Ribosomal RNA large subunit methyltransferase H of Clostridium botulinum (strain Okra / Type B1).